The following is a 264-amino-acid chain: Cell division protein FtsQ (264 aa).

Positions 1 to 24 (MAGPTTAERGARQQESSGPPRVRR) are disordered. The Cytoplasmic portion of the chain corresponds to 1–32 (MAGPTTAERGARQQESSGPPRVRRFRPPRLRT). A helical membrane pass occupies residues 33–53 (IIILAVALVLVAGGTVWVLYG). Residues 54–264 (SNWTRLERVS…VATAPASSGS (211 aa)) are Extracellular-facing. A POTRA domain is found at 57 to 126 (TRLERVSVSG…HGIGLKVTER (70 aa)).

This sequence belongs to the FtsQ/DivIB family. FtsQ subfamily.

The protein resides in the cell membrane. Functionally, essential cell division protein. The sequence is that of Cell division protein FtsQ from Streptomyces coelicolor (strain ATCC BAA-471 / A3(2) / M145).